The primary structure comprises 462 residues: cAMP-dependent protein kinase regulatory subunit (462 aa).

Positions 54–203 (TPSPRFPPSP…RLKYAIEGNF (150 aa)) are dimerization and phosphorylation. Residues 79–157 (FGANANPFGG…PTTDSYPAQY (79 aa)) form a disordered region. The span at 80 to 102 (GANANPFGGSSSNPNPFGGSASP) shows a compositional bias: low complexity. S164 carries the phosphoserine modification. Residues 204–333 (LFSH…FLEE), E282, R291, 336–453 (ILSS…KTGV), E401, and R410 contribute to the 3',5'-cyclic AMP site.

The protein belongs to the cAMP-dependent kinase regulatory chain family. As to quaternary structure, tetramer, composed of 2 regulatory (R) and 2 catalytic (C) subunits. In the presence of cAMP it dissociates into 2 active monomeric C subunits and an R dimer.

The polypeptide is cAMP-dependent protein kinase regulatory subunit (pkar1) (Hypocrea atroviridis (Trichoderma atroviride)).